The following is a 518-amino-acid chain: Wax ester synthase/diacylglycerol acyltransferase 6 (518 aa).

Positions 1–17 (MEIKTRRDTSETSVRKD) are enriched in basic and acidic residues. Residues 1–29 (MEIKTRRDTSETSVRKDDEEEVEEEQPLS) form a disordered region. Over 1–213 (MEIKTRRDTS…LMAGSRGDSR (213 aa)) the chain is Cytoplasmic. The active-site Proton acceptor is His163. The segment at 185–205 (PDELPSLPNQNRSSSRSSRLM) is disordered. Residues 214 to 234 (FLWLVMVIWSAIMLVLNTVCD) traverse the membrane as a helical segment. Over 235–518 (ALEFIATTMF…VQERDSRSLD (284 aa)) the chain is Lumenal. A glycan (N-linked (GlcNAc...) asparagine) is linked at Asn430.

In the N-terminal section; belongs to the long-chain O-acyltransferase family. Expressed in roots, stems, leaves, flowers and siliques.

Its subcellular location is the cell membrane. The protein localises to the endoplasmic reticulum membrane. It is found in the golgi apparatus membrane. It carries out the reaction an acyl-CoA + a 1,2-diacyl-sn-glycerol = a triacyl-sn-glycerol + CoA. The enzyme catalyses a long chain fatty alcohol + a fatty acyl-CoA = a wax ester + CoA. It participates in glycerolipid metabolism; triacylglycerol biosynthesis. It functions in the pathway lipid metabolism. Bifunctional wax ester synthase/diacylglycerol acyltransferase that uses acyl-CoAs with 16, 18 and 20 carbons as substrates, preferably in combination with 16:0ol alcohol. Involved in cuticular wax biosynthesis. In Arabidopsis thaliana (Mouse-ear cress), this protein is Wax ester synthase/diacylglycerol acyltransferase 6.